The primary structure comprises 41 residues: Alpha-conotoxin-like Pu1.2 (41 aa).

A propeptide spanning residues 1-21 (LDGRNAAADFETSDLLAMTIR) is cleaved from the precursor. 2 disulfide bridges follow: cysteine 24/cysteine 30 and cysteine 25/cysteine 37. Cysteine 37 bears the Cysteine amide mark. A propeptide spanning residues 38 to 41 (GGKR) is cleaved from the precursor.

The protein belongs to the conotoxin A superfamily. Non-native isomers 'ribbon' (with disulfide connectivity C1-C4, C2-C3) and 'beads' (with disulfide connectivity C1-C2, C3-C4) also inhibit high voltage-activated (HVA) calcium channel currents in rat DRG neurons (25-30% inhibition at 1 uM toxin). In terms of processing, mutants Pu1.2(9-16), [C3S; C9S]Pu1.2 and [C4S]Pu1.2(1-9) are all C-terminally amidated. Expressed by the venom duct.

It is found in the secreted. Alpha-conotoxins act on postsynaptic membranes, they bind to the nicotinic acetylcholine receptors (nAChR) and thus inhibit them. This toxin also inhibits high voltage-activated (HVA) calcium channel currents in rat DRG neurons (27% inhibition at 1 uM toxin) probably by activating GABA(B) receptors (GABBR1 and/or GABBR2). In Conus pulicarius (Flea-bitten cone), this protein is Alpha-conotoxin-like Pu1.2.